A 363-amino-acid polypeptide reads, in one-letter code: Fructose-1,6-bisphosphatase 1 (363 aa).

N-acetylvaline is present on Val-2. AMP-binding positions include 18–22 and 28–32; these read VLEEG and TGEMT. Mg(2+) is bound by residues Asp-69 and Glu-98. 113–114 is an AMP binding site; the sequence is KY. Asp-119, Leu-121, and Asp-122 together coordinate Mg(2+). 122–125 provides a ligand contact to substrate; the sequence is DGSS. Arg-141 lines the AMP pocket. At Lys-151 the chain carries N6-succinyllysine. Substrate-binding positions include 213 to 216, 244 to 249, Tyr-265, and 275 to 277; these read NEGY, RYVGSM, and KLR. Phosphotyrosine occurs at positions 216, 245, and 265. Residue Glu-281 participates in Mg(2+) binding. Phosphoserine occurs at positions 339 and 353.

This sequence belongs to the FBPase class 1 family. Homotetramer. Mg(2+) is required as a cofactor.

The catalysed reaction is beta-D-fructose 1,6-bisphosphate + H2O = beta-D-fructose 6-phosphate + phosphate. It functions in the pathway carbohydrate biosynthesis; gluconeogenesis. Subject to complex allosteric regulation. The enzyme can assume an active R-state, or an inactive T-state. Intermediate conformations may exist. AMP acts as an allosteric inhibitor. AMP binding affects the turnover of bound substrate and not the affinity for substrate. Fructose 2,6-bisphosphate acts as a competitive inhibitor. Fructose 2,6-bisphosphate and AMP have synergistic effects. Its function is as follows. Catalyzes the hydrolysis of fructose 1,6-bisphosphate to fructose 6-phosphate in the presence of divalent cations, acting as a rate-limiting enzyme in gluconeogenesis. Plays a role in regulating glucose sensing and insulin secretion of pancreatic beta-cells. Appears to modulate glycerol gluconeogenesis in liver. Important regulator of appetite and adiposity; increased expression of the protein in liver after nutrient excess increases circulating satiety hormones and reduces appetite-stimulating neuropeptides and thus seems to provide a feedback mechanism to limit weight gain. This is Fructose-1,6-bisphosphatase 1 (Fbp1) from Rattus norvegicus (Rat).